The chain runs to 308 residues: MKPDAHHVKQFLLRLQDDICQTLSAVDGANFVEDSWRREAGGGGRSRVLRNGGIFEQAGVNFSHVHGDAMPASATAHRPELAGRSFEAMGVSLVVHPHNPYIPTSHANVRFFIAEKPGADPVWWFGGGFDLTPYYGFEEDAVHWHRTARDLCQPFGDDVYPRYKKWCDDYFFLKHRNEQRGIGGLFFDDLNTPDFDHCFAFMQAVGNGYTEAYLPIVERRKAMVWGERERNFQLYRRGRYVEFNLVWDRGTLFGLQTGGRTESILMSMPPLVRWEYDWQPEAGSPEAALSEFIQVRDWVSLPDNSSVS.

Serine 92 lines the substrate pocket. A divalent metal cation is bound by residues histidine 96 and histidine 106. Histidine 106 (proton donor) is an active-site residue. Substrate is bound at residue asparagine 108–arginine 110. Histidine 145 and histidine 175 together coordinate a divalent metal cation. The segment at tyrosine 240 to glutamate 275 is important for dimerization. Residue glycine 258 to arginine 260 participates in substrate binding.

It belongs to the aerobic coproporphyrinogen-III oxidase family. Homodimer. It depends on a divalent metal cation as a cofactor.

It is found in the cytoplasm. The catalysed reaction is coproporphyrinogen III + O2 + 2 H(+) = protoporphyrinogen IX + 2 CO2 + 2 H2O. The protein operates within porphyrin-containing compound metabolism; protoporphyrin-IX biosynthesis; protoporphyrinogen-IX from coproporphyrinogen-III (O2 route): step 1/1. Its function is as follows. Involved in the heme biosynthesis. Catalyzes the aerobic oxidative decarboxylation of propionate groups of rings A and B of coproporphyrinogen-III to yield the vinyl groups in protoporphyrinogen-IX. The sequence is that of Oxygen-dependent coproporphyrinogen-III oxidase from Salmonella paratyphi A (strain ATCC 9150 / SARB42).